We begin with the raw amino-acid sequence, 251 residues long: tRNA pseudouridine synthase A (251 aa).

D54 acts as the Nucleophile in catalysis. Y111 serves as a coordination point for substrate.

It belongs to the tRNA pseudouridine synthase TruA family. Homodimer.

The catalysed reaction is uridine(38/39/40) in tRNA = pseudouridine(38/39/40) in tRNA. Its function is as follows. Formation of pseudouridine at positions 38, 39 and 40 in the anticodon stem and loop of transfer RNAs. In Mycoplasma mycoides subsp. mycoides SC (strain CCUG 32753 / NCTC 10114 / PG1), this protein is tRNA pseudouridine synthase A.